Here is a 194-residue protein sequence, read N- to C-terminus: uncharacterized protein (194 aa).

This is an uncharacterized protein from Acanthamoeba polyphaga (Amoeba).